The following is a 456-amino-acid chain: uncharacterized protein (456 aa).

Composition is skewed to basic and acidic residues over residues 181–210 (DQRK…DKKV) and 217–231 (KEIE…ENEE). The tract at residues 181–231 (DQRKESIVNDERKKNPEFREKPDKNEDKKVKPPPSLKEIENKGIDHEENEE) is disordered. A coiled-coil region spans residues 216 to 248 (LKEIENKGIDHEENEEDKKRELMFKLQLLQKQY). Residues 347–365 (LALAILFNAVWFIAAKMIM) traverse the membrane as a helical segment. Residues 383–407 (NKSGTTPNSVSPRTWGNSKSPQSEF) show a composition bias toward polar residues. The disordered stretch occupies residues 383–456 (NKSGTTPNSV…MREQGIETLK (74 aa)). A compositionally biased stretch (basic and acidic residues) spans 441–456 (DESRREMREQGIETLK).

Belongs to the IIV-6 067R family.

The protein resides in the membrane. This is an uncharacterized protein from Invertebrate iridescent virus 6 (IIV-6).